Here is a 186-residue protein sequence, read N- to C-terminus: Ribosome-recycling factor (186 aa).

The protein belongs to the RRF family.

It is found in the cytoplasm. In terms of biological role, responsible for the release of ribosomes from messenger RNA at the termination of protein biosynthesis. May increase the efficiency of translation by recycling ribosomes from one round of translation to another. The protein is Ribosome-recycling factor of Rickettsia massiliae (strain Mtu5).